Here is a 238-residue protein sequence, read N- to C-terminus: Cysteine-rich venom protein pseudechetoxin-like (238 aa).

The first 19 residues, 1 to 19 (MIAFLVLLSLAAVLQQSSG), serve as a signal peptide directing secretion. The propeptide occupies 20-28 (TVDFASESS). In terms of domain architecture, SCP spans 38–164 (VDKHNDLRRS…STKYLYVCQY (127 aa)). Cystine bridges form between cysteine 75–cysteine 153, cysteine 92–cysteine 165, cysteine 148–cysteine 162, cysteine 184–cysteine 191, cysteine 187–cysteine 196, cysteine 200–cysteine 233, cysteine 209–cysteine 227, and cysteine 218–cysteine 231. The ShKT domain occupies 200 to 233 (CKHNDDLSNCKTLVKKHKCQTEWIKSKCPATCFC).

Belongs to the CRISP family. As to expression, expressed by the venom gland.

The protein resides in the secreted. In terms of biological role, blocks olfactory (CNGA2) and retinal (CNGA1) CNG channel currents. Does not affect neither depolarization- nor caffeine-induced contraction of smooth muscle. The polypeptide is Cysteine-rich venom protein pseudechetoxin-like (Pseudonaja textilis (Eastern brown snake)).